A 200-amino-acid chain; its full sequence is MADQGLEGSQPVDLQKHPSGIVPTLQNIVSTVNLDCKLDLKTIALQARNAEYNPKRFAAVIMRIRDPKTTALIFASGKMVCTGAKSEQQSKLAARKYARIIQKLGFPAKFKDFKIQNIVGSCDVKFPIRLEGLAYSHGAFSSYEPELFPGLIYRMKQPKIVLLIFVSGKIVLTGAKVRDETYTAFENIYPVLTEFRKNQQ.

2 repeat units span residues Leu25 to Ile101 and Ile115 to Leu192.

Belongs to the TBP family. As to quaternary structure, belongs to the TFIID complex together with the TBP-associated factors (TAFs). Binds DNA as monomer.

It is found in the nucleus. In terms of biological role, general transcription factor that functions at the core of the DNA-binding multiprotein factor TFIID. Binding of TFIID to the TATA box is the initial transcriptional step of the pre-initiation complex (PIC), playing a role in the activation of eukaryotic genes transcribed by RNA polymerase II. The polypeptide is TATA-box-binding protein (TBP1) (Glycine max (Soybean)).